The following is a 612-amino-acid chain: Protein hinderin (612 aa).

Residue S20 is modified to Phosphoserine. Residues 90–166 (LKDLCLEDKR…CQELLSLYQK (77 aa)) adopt a coiled-coil conformation. S178 bears the Phosphoserine mark. The stretch at 362–406 (IEKQLSEDRRQQLMLQKMELEIEKERLQHLLAQQETKLLLKQQQL) forms a coiled coil. Residues 462-477 (STSFKKCPDSPNSGQN) show a composition bias toward polar residues. 2 disordered regions span residues 462–484 (STSFKKCPDSPNSGQNQREKKTV) and 509–598 (ETVT…RSPE). Phosphoserine occurs at positions 471, 527, and 558. Polar residues-rich tracts occupy residues 555–568 (QSLSPNSAPKSQPH) and 575–585 (TWSTLRPTPQK).

In terms of assembly, interacts (via N- and C-terminal domains) with SMC3 (via central hinge region).

In terms of biological role, competes with SMC1 for binding to SMC3. May affect the availability of SMC3 to engage in the formation of multimeric protein complexes. The protein is Protein hinderin (Kiaa1328) of Mus musculus (Mouse).